The sequence spans 339 residues: Probable long-chain-alcohol O-fatty-acyltransferase 7 (339 aa).

7 helical membrane-spanning segments follow: residues 7-27 (SLIN…CLPP), 39-59 (IFPV…SIFT), 113-133 (HLST…LYVH), 143-163 (FLLC…LTLL), 226-246 (MLIG…VVFF), 254-274 (TGEV…EVAA), and 287-307 (PVVS…WLFF).

This sequence belongs to the wax synthase family.

It is found in the membrane. It carries out the reaction a long chain fatty alcohol + a fatty acyl-CoA = a wax ester + CoA. Catalyzes the final step in the synthesis of long-chain linear esters (waxes). This is Probable long-chain-alcohol O-fatty-acyltransferase 7 (AT7) from Arabidopsis thaliana (Mouse-ear cress).